We begin with the raw amino-acid sequence, 268 residues long: Ribosomal RNA small subunit methyltransferase A (268 aa).

S-adenosyl-L-methionine is bound by residues N23, I25, G50, E72, D97, and N116.

The protein belongs to the class I-like SAM-binding methyltransferase superfamily. rRNA adenine N(6)-methyltransferase family. RsmA subfamily.

It localises to the cytoplasm. It catalyses the reaction adenosine(1518)/adenosine(1519) in 16S rRNA + 4 S-adenosyl-L-methionine = N(6)-dimethyladenosine(1518)/N(6)-dimethyladenosine(1519) in 16S rRNA + 4 S-adenosyl-L-homocysteine + 4 H(+). Its function is as follows. Specifically dimethylates two adjacent adenosines (A1518 and A1519) in the loop of a conserved hairpin near the 3'-end of 16S rRNA in the 30S particle. May play a critical role in biogenesis of 30S subunits. This is Ribosomal RNA small subunit methyltransferase A from Rickettsia bellii (strain OSU 85-389).